A 119-amino-acid polypeptide reads, in one-letter code: Large ribosomal subunit protein uL18 (119 aa).

It belongs to the universal ribosomal protein uL18 family. In terms of assembly, part of the 50S ribosomal subunit; part of the 5S rRNA/L5/L18/L25 subcomplex. Contacts the 5S and 23S rRNAs.

Its function is as follows. This is one of the proteins that bind and probably mediate the attachment of the 5S RNA into the large ribosomal subunit, where it forms part of the central protuberance. The chain is Large ribosomal subunit protein uL18 from Clostridium tetani (strain Massachusetts / E88).